Here is a 258-residue protein sequence, read N- to C-terminus: Indole-3-glycerol phosphate synthase 2 (258 aa).

Belongs to the TrpC family.

The enzyme catalyses 1-(2-carboxyphenylamino)-1-deoxy-D-ribulose 5-phosphate + H(+) = (1S,2R)-1-C-(indol-3-yl)glycerol 3-phosphate + CO2 + H2O. It functions in the pathway amino-acid biosynthesis; L-tryptophan biosynthesis; L-tryptophan from chorismate: step 4/5. Its function is as follows. The function of the second trp operon in S.coelicolor is to produce tryptophan for the biosynthesis of calcium-dependent antibiotic (CDA). This chain is Indole-3-glycerol phosphate synthase 2 (trpC2), found in Streptomyces coelicolor (strain ATCC BAA-471 / A3(2) / M145).